A 284-amino-acid polypeptide reads, in one-letter code: Phosphonates import ATP-binding protein PhnC 2 (284 aa).

Positions Ile5 to Ala253 constitute an ABC transporter domain. Residue Gly38–Ser45 coordinates ATP.

This sequence belongs to the ABC transporter superfamily. Phosphonates importer (TC 3.A.1.9.1) family. The complex is composed of two ATP-binding proteins (PhnC), two transmembrane proteins (PhnE) and a solute-binding protein (PhnD).

Its subcellular location is the cell inner membrane. It catalyses the reaction phosphonate(out) + ATP + H2O = phosphonate(in) + ADP + phosphate + H(+). Its function is as follows. Part of the ABC transporter complex PhnCDE involved in phosphonates import. Responsible for energy coupling to the transport system. The polypeptide is Phosphonates import ATP-binding protein PhnC 2 (Cupriavidus necator (strain ATCC 17699 / DSM 428 / KCTC 22496 / NCIMB 10442 / H16 / Stanier 337) (Ralstonia eutropha)).